Here is a 412-residue protein sequence, read N- to C-terminus: Argininosuccinate synthase (412 aa).

Residues 24-32 (AFSGGLDTS) and A50 each bind ATP. The L-citrulline site is built by Y103 and S108. G132 contributes to the ATP binding site. The L-aspartate site is built by T134, N138, and D139. N138 is a binding site for L-citrulline. R142 contributes to the L-citrulline binding site.

Belongs to the argininosuccinate synthase family. Type 1 subfamily. Homotetramer.

The protein resides in the cytoplasm. It carries out the reaction L-citrulline + L-aspartate + ATP = 2-(N(omega)-L-arginino)succinate + AMP + diphosphate + H(+). Its pathway is amino-acid biosynthesis; L-arginine biosynthesis; L-arginine from L-ornithine and carbamoyl phosphate: step 2/3. The polypeptide is Argininosuccinate synthase (Xanthomonas axonopodis pv. citri (strain 306)).